The primary structure comprises 103 residues: Large ribosomal subunit protein bL21 (103 aa).

The protein belongs to the bacterial ribosomal protein bL21 family. Part of the 50S ribosomal subunit. Contacts protein L20.

This protein binds to 23S rRNA in the presence of protein L20. This Clostridium acetobutylicum (strain ATCC 824 / DSM 792 / JCM 1419 / IAM 19013 / LMG 5710 / NBRC 13948 / NRRL B-527 / VKM B-1787 / 2291 / W) protein is Large ribosomal subunit protein bL21.